We begin with the raw amino-acid sequence, 261 residues long: Enolase-phosphatase E1 (261 aa).

Residues aspartate 16 and glutamate 18 each contribute to the Mg(2+) site. Substrate is bound by residues 153-154 and lysine 187; that span reads SS. Residue aspartate 212 participates in Mg(2+) binding.

This sequence belongs to the HAD-like hydrolase superfamily. MasA/MtnC family. In terms of assembly, monomer. Mg(2+) is required as a cofactor.

The protein localises to the cytoplasm. Its subcellular location is the nucleus. The enzyme catalyses 5-methylsulfanyl-2,3-dioxopentyl phosphate + H2O = 1,2-dihydroxy-5-(methylsulfanyl)pent-1-en-3-one + phosphate. The protein operates within amino-acid biosynthesis; L-methionine biosynthesis via salvage pathway; L-methionine from S-methyl-5-thio-alpha-D-ribose 1-phosphate: step 3/6. Its pathway is amino-acid biosynthesis; L-methionine biosynthesis via salvage pathway; L-methionine from S-methyl-5-thio-alpha-D-ribose 1-phosphate: step 4/6. Bifunctional enzyme that catalyzes the enolization of 2,3-diketo-5-methylthiopentyl-1-phosphate (DK-MTP-1-P) into the intermediate 2-hydroxy-3-keto-5-methylthiopentenyl-1-phosphate (HK-MTPenyl-1-P), which is then dephosphorylated to form the acireductone 1,2-dihydroxy-3-keto-5-methylthiopentene (DHK-MTPene). This is Enolase-phosphatase E1 from Homo sapiens (Human).